The chain runs to 356 residues: Protein-arginine kinase (356 aa).

The region spanning isoleucine 24–alanine 254 is the Phosphagen kinase C-terminal domain. Residues serine 27–arginine 31, histidine 91, arginine 125, arginine 176–methionine 180, and arginine 207–glutamate 212 contribute to the ATP site. The short motif at arginine 337–alanine 342 is the RDXXRA motif of the pArg binding pocket involved in allosteric regulation element.

The protein belongs to the ATP:guanido phosphotransferase family.

The enzyme catalyses L-arginyl-[protein] + ATP = N(omega)-phospho-L-arginyl-[protein] + ADP + H(+). With respect to regulation, appears to be allosterically activated by the binding of pArg-containing polypeptides to the pArg-binding pocket localized in the C-terminal domain of McsB. In terms of biological role, catalyzes the specific phosphorylation of arginine residues in a large number of proteins. Is part of the bacterial stress response system. Protein arginine phosphorylation has a physiologically important role and is involved in the regulation of many critical cellular processes, such as protein homeostasis, motility, competence, and stringent and stress responses, by regulating gene expression and protein activity. In Halalkalibacterium halodurans (strain ATCC BAA-125 / DSM 18197 / FERM 7344 / JCM 9153 / C-125) (Bacillus halodurans), this protein is Protein-arginine kinase.